The sequence spans 703 residues: Calpain-8 (703 aa).

The 300-residue stretch at 45–344 (LFKDPEFPAC…FSRLEICNLS (300 aa)) folds into the Calpain catalytic domain. Active-site residues include Cys105, His262, and Asn286. Residues 356-379 (WNLVLFNGHWTRGSTAGGCQNYPA) are domain III. EF-hand domains are found at residues 575–610 (FNIN…IQKY), 618–640 (DYNH…AGFT), and 670–703 (IRLE…CVLV). Ca(2+) is bound by residues Asp588, Asn590, Thr592, Thr594, Glu599, Asp618, Asn620, Ser622, Thr624, and Glu629.

It belongs to the peptidase C2 family. As to quaternary structure, monomer and homooligomer. Interacts with COPS1/GPS1, COPB1, EYA2, NME2, NME4 and TOMM70. Requires Ca(2+) as cofactor. Undergoes autolytic cleavage between Ala-5 and Ala-6 which gives rise to fragments extending from Ala-6 to the C-terminus, Ala-6 to the EF-hand 2 domain and from Ala-6 to the beginning of domain III. In terms of tissue distribution, stomach.

It is found in the cytoplasm. The protein localises to the golgi apparatus. The catalysed reaction is Broad endopeptidase specificity.. In terms of biological role, calcium-regulated non-lysosomal thiol-protease. Involved in membrane trafficking in the gastric surface mucus cells (pit cells) and may involve the membrane trafficking of mucus cells via interactions with coat protein. Proteolytically cleaves the beta-subunit of coatomer complex. This chain is Calpain-8 (CAPN8), found in Homo sapiens (Human).